Reading from the N-terminus, the 258-residue chain is Calcium release-activated calcium channel protein 1 (258 aa).

Over 1–63 the chain is Cytoplasmic; sequence MYPECGVETK…SRAKLKASSR (63 aa). A helical transmembrane segment spans residues 64-81; that stretch reads TSALLSGFAMVAMVEVQL. The Extracellular portion of the chain corresponds to 82 to 91; it reads EPNHAYPPGL. Residues 92-112 traverse the membrane as a helical segment; that stretch reads LIAFSACTTVLVAVHLFALMV. Residues 113-145 lie on the Cytoplasmic side of the membrane; it reads STCILPNIEAVSNVHNLNSVKESPHERMHHHIE. The chain crosses the membrane as a helical span at residues 146–166; the sequence is LAWAFSTVIGTLLFLAEVVLL. Residues 167–192 are Extracellular-facing; the sequence is CWVKFLPVNSPKISSNETSAVSSGQA. Asn-182 carries N-linked (GlcNAc...) asparagine glycosylation. The chain crosses the membrane as a helical span at residues 193 to 213; that stretch reads AAITSTAIMVPFGLVFIVFAV. The Cytoplasmic segment spans residues 214-258; that stretch reads HFYRSLVSHKTDRQFQELNELAELAQLQDQLDHRGDPVQSPVHYA.

It belongs to the Orai family.

It is found in the cell membrane. Functionally, ca(2+) release-activated Ca(2+) (CRAC) channel subunit which mediates Ca(2+) influx following depletion of intracellular Ca(2+) stores. The sequence is that of Calcium release-activated calcium channel protein 1 (orai1) from Xenopus laevis (African clawed frog).